The following is a 570-amino-acid chain: Urease subunit alpha (570 aa).

The 440-residue stretch at 131-570 (GGFDSHIHFI…LPLAQRYFMF (440 aa)) folds into the Urease domain. Residues His136, His138, and Lys219 each contribute to the Ni(2+) site. Residue Lys219 is modified to N6-carboxylysine. His221 lines the substrate pocket. Residues His248 and His274 each coordinate Ni(2+). Residue His322 is the Proton donor of the active site. Ni(2+) is bound at residue Asp362.

This sequence belongs to the metallo-dependent hydrolases superfamily. Urease alpha subunit family. In terms of assembly, heterotrimer of UreA (gamma), UreB (beta) and UreC (alpha) subunits. Three heterotrimers associate to form the active enzyme. Ni cation is required as a cofactor. Carboxylation allows a single lysine to coordinate two nickel ions.

Its subcellular location is the cytoplasm. The catalysed reaction is urea + 2 H2O + H(+) = hydrogencarbonate + 2 NH4(+). The protein operates within nitrogen metabolism; urea degradation; CO(2) and NH(3) from urea (urease route): step 1/1. In Rhodopseudomonas palustris (strain TIE-1), this protein is Urease subunit alpha.